We begin with the raw amino-acid sequence, 142 residues long: Hdr-like menaquinol oxidoreductase cytochrome c subunit (142 aa).

At 1–6 the chain is on the cytoplasmic side; the sequence is MYNKKY. A helical transmembrane segment spans residues 7–27; that stretch reads VIPLILVFLIGFFTPYWYNAM. The Extracellular portion of the chain corresponds to 28-142; it reads AGTLGHVPTL…GIEELSKYFS (115 aa). Residues Cys93, Cys96, His97, Cys104, Cys107, His108, Cys117, Cys120, and His121 each contribute to the heme site.

In terms of assembly, consists of five subunits: an integral membrane subunit, a cytochrome b-like subunit, a cytochrome c subunit and two iron-sulfur subunits. In terms of processing, binds 3 heme groups per subunit.

It is found in the cell membrane. Its function is as follows. Has menaquinol-oxidizing activity. HmeA, HmeB and HmeE subunits may together catalyze electron transfer from menaquinol to cytochrome c. In Archaeoglobus fulgidus (strain ATCC 49558 / DSM 4304 / JCM 9628 / NBRC 100126 / VC-16), this protein is Hdr-like menaquinol oxidoreductase cytochrome c subunit (hmeE).